The following is a 203-amino-acid chain: Outer-membrane lipoprotein LolB (203 aa).

The first 21 residues, 1–21 (MTGRWSPRLLAGLLAALVLSG), serve as a signal peptide directing secretion. C22 carries the N-palmitoyl cysteine lipid modification. The S-diacylglycerol cysteine moiety is linked to residue C22.

Belongs to the LolB family. In terms of assembly, monomer.

It localises to the cell outer membrane. In terms of biological role, plays a critical role in the incorporation of lipoproteins in the outer membrane after they are released by the LolA protein. This Halorhodospira halophila (strain DSM 244 / SL1) (Ectothiorhodospira halophila (strain DSM 244 / SL1)) protein is Outer-membrane lipoprotein LolB.